A 358-amino-acid polypeptide reads, in one-letter code: Cytoplasmic dynein 2 light intermediate chain 1 (358 aa).

Disordered stretches follow at residues Met-1 to His-35 and Glu-307 to Pro-358. The span at Thr-24–Asp-33 shows a compositional bias: acidic residues. 2 stretches are compositionally biased toward basic and acidic residues: residues Glu-307–Lys-320 and Arg-333–Lys-349.

It belongs to the dynein light intermediate chain family. In terms of assembly, light intermediate chain of the cytoplasmic dynein complex 2, a multisubunit complex composed at least of eleven different proteins. The cytoplasmic dynein 2 complex consists of two catalytic heavy chains (HCs) and a number of non-catalytic subunits presented by intermediate chains (ICs), light intermediate chains (LICs) and light chains (LCs). Among them, a heavy chain (DYNC2H1), two intermediate chains (DYNC2I2 and DYNC2I1), a light intermediate chain (DYNC2LI1), and a light chain (DYNLT2B) are unique to the dynein-2 complex, but a subset of light chains are also shared by dynein-1 and dynein-2 complexes. Dynein-2 complex is built around two copies of cytoplasmic dynein 2 heavy chain 1 (DYNC2H1). The C-terminal region forms the motor domain, which converts the energy from ATP hydrolysis into movement. Its N-terminal region forms the tail, an extended structure that binds the other subunits and holds the two heavy chains in a homodimer.

The protein resides in the cytoplasm. Its subcellular location is the cell projection. It is found in the cilium. It localises to the cytoskeleton. The protein localises to the cilium basal body. The protein resides in the cilium axoneme. Its subcellular location is the microtubule organizing center. It is found in the centrosome. Acts as one of several non-catalytic accessory components of the cytoplasmic dynein 2 complex (dynein-2 complex), a motor protein complex that drives the movement of cargos along microtubules within cilia and flagella in concert with the intraflagellar transport (IFT) system, facilitating the assembly of these organelles. The chain is Cytoplasmic dynein 2 light intermediate chain 1 (dync2li1) from Danio rerio (Zebrafish).